The primary structure comprises 281 residues: Putative dehydrogenase/reductase SDR family member 4-like 1 (281 aa).

An NADP(+)-binding site is contributed by 36 to 60; that stretch reads LVTASTDWIGFAVAQRLAQDGAHVV. A substrate-binding site is contributed by S172. The active-site Proton acceptor is Y185. K189 is a binding site for NADP(+). The short motif at 279 to 281 is the Peroxisomal targeting signal element; it reads SRL.

Belongs to the short-chain dehydrogenases/reductases (SDR) family.

Its function is as follows. Putative oxidoreductase. The polypeptide is Putative dehydrogenase/reductase SDR family member 4-like 1 (Homo sapiens (Human)).